The chain runs to 431 residues: uncharacterized protein (431 aa).

Helical transmembrane passes span 42–62 (LLIG…IGCL) and 74–94 (VMIF…ATML). Asparagine 105 is a glycosylation site (N-linked (GlcNAc...) asparagine; by host). Helical transmembrane passes span 111-131 (LVLF…LFLI), 153-173 (AGVA…AAVP), 202-222 (MWFL…ELAY), 236-256 (VCTF…FRVL), and 279-299 (ATRT…IAFF).

The protein resides in the membrane. This is an uncharacterized protein from Homo sapiens (Human).